The primary structure comprises 435 residues: UPF0761 membrane protein mma_2179 (435 aa).

6 helical membrane passes run 45–65 (VLALVPILTIALAIFTTFPLF), 103–123 (LSAFGAVALIVTAVAMMLMID), 142–162 (ILVYWAIVTLGPLLIGASMTF), 177–197 (VPFVGAVFYTSISILLSMVAF), 208–228 (LVEWRDAVVGGLLAAIAFEIV), and 252–272 (FPIFLVWVYLGWLITLAGAVV).

This sequence belongs to the UPF0761 family.

Its subcellular location is the cell inner membrane. The protein is UPF0761 membrane protein mma_2179 of Janthinobacterium sp. (strain Marseille) (Minibacterium massiliensis).